Here is a 298-residue protein sequence, read N- to C-terminus: tRNA pseudouridine synthase B (298 aa).

The Nucleophile role is filled by aspartate 42.

The protein belongs to the pseudouridine synthase TruB family. Type 1 subfamily.

The catalysed reaction is uridine(55) in tRNA = pseudouridine(55) in tRNA. In terms of biological role, responsible for synthesis of pseudouridine from uracil-55 in the psi GC loop of transfer RNAs. In Mycobacterium tuberculosis (strain CDC 1551 / Oshkosh), this protein is tRNA pseudouridine synthase B.